The chain runs to 137 residues: DNA-binding protein H-NS (137 aa).

A DNA-binding region spans residues 112-117 (QGRTPA).

The protein belongs to the histone-like protein H-NS family. Homodimer that oligomerizes on DNA into higher-order complexes that form bridges between disparate regions of DNA compacting it. Interacts with Hha, YdgT and StpA.

The protein localises to the cytoplasm. It is found in the nucleoid. A DNA-binding protein implicated in transcriptional repression and chromosome organization and compaction. Binds nucleation sites in AT-rich DNA and bridges them, forming higher-order nucleoprotein complexes and condensing the chromosome. As many horizontally transferred genes are AT-rich, it plays a central role in silencing foreign genes. A subset of genes are repressed by H-NS in association with other proteins. This is DNA-binding protein H-NS (hns) from Salmonella paratyphi A (strain ATCC 9150 / SARB42).